The primary structure comprises 572 residues: Methionine--tRNA ligase (572 aa).

The 'HIGH' region motif lies at 11–21 (PYINGIKHLGN). Residues Cys143, Cys146, Cys156, and Cys159 each coordinate Zn(2+). The short motif at 346-350 (QFSTS) is the 'KMSKS' region element. Position 349 (Thr349) interacts with ATP.

Belongs to the class-I aminoacyl-tRNA synthetase family. MetG type 1 subfamily. In terms of assembly, monomer. It depends on Zn(2+) as a cofactor.

The protein localises to the cytoplasm. It carries out the reaction tRNA(Met) + L-methionine + ATP = L-methionyl-tRNA(Met) + AMP + diphosphate. In terms of biological role, is required not only for elongation of protein synthesis but also for the initiation of all mRNA translation through initiator tRNA(fMet) aminoacylation. This Cereibacter sphaeroides (strain KD131 / KCTC 12085) (Rhodobacter sphaeroides) protein is Methionine--tRNA ligase.